A 177-amino-acid chain; its full sequence is Dihydrofolate reductase (177 aa).

It carries out the reaction (6S)-5,6,7,8-tetrahydrofolate + NADP(+) = 7,8-dihydrofolate + NADPH + H(+). In terms of biological role, provides the tetrahydrofolates necessary for the synthesis of nucleotides and amino acids. Bacteriophage T5 induces high levels of dihydrofolate reductase in the host cell, probably for the viral replication. The protein is Dihydrofolate reductase of Escherichia phage T5 (Enterobacteria phage T5).